The primary structure comprises 411 residues: Zinc finger protein draculin (411 aa).

The tract at residues 1-33 is disordered; it reads MKNTTKPCRTEHHNAEGQRDRMEGNKKGETKAK. The span at 8–32 shows a compositional bias: basic and acidic residues; it reads CRTEHHNAEGQRDRMEGNKKGETKA. 13 C2H2-type zinc fingers span residues 36 to 58, 64 to 86, 92 to 114, 120 to 142, 148 to 170, 176 to 198, 204 to 226, 232 to 254, 260 to 282, 288 to 310, 316 to 338, 344 to 366, and 372 to 394; these read VACS…MRVH, YRCD…LDIH, YTCD…MTLH, YKCD…MKLH, HKCE…LMVH, YTCD…MNIH, YTCD…MRFH, FTCD…MKIH, YTCD…MTHH, FHCD…IKTH, YSCL…EKRH, FMCF…LPVH, and YMCS…EKTH.

In terms of tissue distribution, specifically expressed in the hematopoietic lineage during embryogenesis; first expressed at the late blastula stage around the blastoderm margin. During gastrulation, restricted to the ventral mesoderm, the presumptive prechordal plate and the dorso-marginal cells of the organizer. At the 3-somite stage, strongly expressed in a caudal domain (marking the erythroid lineage) and a cephalic domain of the lateral mesoderm. At the 8- to 10-somite stage, caudal expression is in two bands of lateral mesoderm which later converge at the midline. Anterior expression is also in two bands of lateral mesoderm which converge as two patches at the midline by the 15-somite stage, with increased scattering of single cells (macrophage precursors) away from the midline to the yolksac. Once at the yolksac, expression is lost. By 20-24 hours post-fertilization (hpf), expressed in proerythroblasts in the erythroid blood island centered above the uro-genital opening. Expression persists in circulating erythroblasts but is lost in mature erythrocytes.

In Danio rerio (Zebrafish), this protein is Zinc finger protein draculin.